The following is a 211-amino-acid chain: tRNA (guanine-N(7)-)-methyltransferase (211 aa).

S-adenosyl-L-methionine contacts are provided by glutamate 44, aspartate 69, aspartate 96, and aspartate 118. Residue aspartate 118 is part of the active site. Position 122 (lysine 122) interacts with substrate. The interaction with RNA stretch occupies residues 124 to 129; sequence KHEKRR. Residues aspartate 154 and 191-194 each bind substrate; that span reads TEYE.

The protein belongs to the class I-like SAM-binding methyltransferase superfamily. TrmB family.

The enzyme catalyses guanosine(46) in tRNA + S-adenosyl-L-methionine = N(7)-methylguanosine(46) in tRNA + S-adenosyl-L-homocysteine. It functions in the pathway tRNA modification; N(7)-methylguanine-tRNA biosynthesis. Catalyzes the formation of N(7)-methylguanine at position 46 (m7G46) in tRNA. This is tRNA (guanine-N(7)-)-methyltransferase from Streptococcus pyogenes serotype M12 (strain MGAS2096).